A 427-amino-acid polypeptide reads, in one-letter code: Glutamate-1-semialdehyde 2,1-aminomutase (427 aa).

At K264 the chain carries N6-(pyridoxal phosphate)lysine.

Belongs to the class-III pyridoxal-phosphate-dependent aminotransferase family. HemL subfamily. Homodimer. It depends on pyridoxal 5'-phosphate as a cofactor.

It is found in the cytoplasm. The catalysed reaction is (S)-4-amino-5-oxopentanoate = 5-aminolevulinate. It participates in porphyrin-containing compound metabolism; protoporphyrin-IX biosynthesis; 5-aminolevulinate from L-glutamyl-tRNA(Glu): step 2/2. This is Glutamate-1-semialdehyde 2,1-aminomutase from Clostridium botulinum (strain Alaska E43 / Type E3).